Consider the following 669-residue polypeptide: uncharacterized protein (669 aa).

Transmembrane regions (helical) follow at residues 9-29 (PLVI…IFIA), 48-68 (FSWF…ILSV), 87-107 (FLSW…MFFG), 139-159 (WGIH…YFGF), 186-206 (AIDV…LGFG), 224-244 (SFAL…FSAI), 259-279 (LTLA…LYLL), 314-334 (WTVL…LFIA), 345-365 (FIFG…TVFG), 397-417 (YLPL…LFFI), 444-464 (AIMW…SGGL), and 470-490 (MTLI…FSLW).

This sequence belongs to the BCCT transporter (TC 2.A.15) family.

It localises to the cell inner membrane. This is an uncharacterized protein from Haemophilus influenzae (strain ATCC 51907 / DSM 11121 / KW20 / Rd).